Consider the following 89-residue polypeptide: Small ribosomal subunit protein uS15 (89 aa).

It belongs to the universal ribosomal protein uS15 family. In terms of assembly, part of the 30S ribosomal subunit. Forms a bridge to the 50S subunit in the 70S ribosome, contacting the 23S rRNA.

Its function is as follows. One of the primary rRNA binding proteins, it binds directly to 16S rRNA where it helps nucleate assembly of the platform of the 30S subunit by binding and bridging several RNA helices of the 16S rRNA. Forms an intersubunit bridge (bridge B4) with the 23S rRNA of the 50S subunit in the ribosome. The protein is Small ribosomal subunit protein uS15 of Staphylococcus epidermidis (strain ATCC 12228 / FDA PCI 1200).